The chain runs to 145 residues: 3-hydroxyacyl-[acyl-carrier-protein] dehydratase FabZ (145 aa).

His48 is a catalytic residue.

It belongs to the thioester dehydratase family. FabZ subfamily.

The protein resides in the cytoplasm. It carries out the reaction a (3R)-hydroxyacyl-[ACP] = a (2E)-enoyl-[ACP] + H2O. Functionally, involved in unsaturated fatty acids biosynthesis. Catalyzes the dehydration of short chain beta-hydroxyacyl-ACPs and long chain saturated and unsaturated beta-hydroxyacyl-ACPs. This Stutzerimonas stutzeri (strain A1501) (Pseudomonas stutzeri) protein is 3-hydroxyacyl-[acyl-carrier-protein] dehydratase FabZ.